The primary structure comprises 741 residues: Beta-galactosidase 10 (741 aa).

The signal sequence occupies residues 1–29; it reads MNRVTTESIASTAILVVMVFLFSWRSIEA. A glycan (N-linked (GlcNAc...) asparagine) is linked at asparagine 31. The Proton donor role is filled by glutamate 188. Glutamate 257 serves as the catalytic Nucleophile. Residues asparagine 358, asparagine 396, asparagine 469, asparagine 525, and asparagine 583 are each glycosylated (N-linked (GlcNAc...) asparagine).

Belongs to the glycosyl hydrolase 35 family. As to expression, ubiquitous.

It is found in the secreted. Its subcellular location is the extracellular space. It localises to the apoplast. The catalysed reaction is Hydrolysis of terminal non-reducing beta-D-galactose residues in beta-D-galactosides.. The polypeptide is Beta-galactosidase 10 (BGAL10) (Arabidopsis thaliana (Mouse-ear cress)).